Reading from the N-terminus, the 277-residue chain is Urease accessory protein UreD (277 aa).

This sequence belongs to the UreD family. As to quaternary structure, ureD, UreF and UreG form a complex that acts as a GTP-hydrolysis-dependent molecular chaperone, activating the urease apoprotein by helping to assemble the nickel containing metallocenter of UreC. The UreE protein probably delivers the nickel.

It localises to the cytoplasm. Required for maturation of urease via the functional incorporation of the urease nickel metallocenter. The protein is Urease accessory protein UreD of Pseudomonas entomophila (strain L48).